We begin with the raw amino-acid sequence, 181 residues long: uncharacterized protein (181 aa).

The tract at residues 151 to 181 (AQKKKDFQEPENKHEQLTSTKAPCQENWSDF) is disordered. Over residues 154–166 (KKDFQEPENKHEQ) the composition is skewed to basic and acidic residues. The segment covering 167-181 (LTSTKAPCQENWSDF) has biased composition (polar residues).

This is an uncharacterized protein from Caenorhabditis elegans.